The following is a 294-amino-acid chain: Bifunctional protein FolD (294 aa).

NADP(+)-binding positions include 166 to 168 (GRS), Ser191, and Ile232.

This sequence belongs to the tetrahydrofolate dehydrogenase/cyclohydrolase family. Homodimer.

The enzyme catalyses (6R)-5,10-methylene-5,6,7,8-tetrahydrofolate + NADP(+) = (6R)-5,10-methenyltetrahydrofolate + NADPH. The catalysed reaction is (6R)-5,10-methenyltetrahydrofolate + H2O = (6R)-10-formyltetrahydrofolate + H(+). It participates in one-carbon metabolism; tetrahydrofolate interconversion. In terms of biological role, catalyzes the oxidation of 5,10-methylenetetrahydrofolate to 5,10-methenyltetrahydrofolate and then the hydrolysis of 5,10-methenyltetrahydrofolate to 10-formyltetrahydrofolate. In Bradyrhizobium sp. (strain BTAi1 / ATCC BAA-1182), this protein is Bifunctional protein FolD.